Here is a 93-residue protein sequence, read N- to C-terminus: Large ribosomal subunit protein uL23cz/uL23cy (93 aa).

Belongs to the universal ribosomal protein uL23 family. As to quaternary structure, part of the 50S ribosomal subunit.

The protein localises to the plastid. The protein resides in the chloroplast. Binds to 23S rRNA. The polypeptide is Large ribosomal subunit protein uL23cz/uL23cy (rpl23-A) (Gossypium barbadense (Sea Island cotton)).